The sequence spans 340 residues: Glycerol-3-phosphate dehydrogenase [NAD(P)+] (340 aa).

Residues serine 13, tryptophan 14, and lysine 108 each coordinate NADPH. Positions 108, 139, and 141 each coordinate sn-glycerol 3-phosphate. Residue alanine 143 participates in NADPH binding. Positions 194, 247, 257, 258, and 259 each coordinate sn-glycerol 3-phosphate. The Proton acceptor role is filled by lysine 194. Arginine 258 is a binding site for NADPH. Residues valine 282 and glutamate 284 each coordinate NADPH.

Belongs to the NAD-dependent glycerol-3-phosphate dehydrogenase family.

It localises to the cytoplasm. The catalysed reaction is sn-glycerol 3-phosphate + NAD(+) = dihydroxyacetone phosphate + NADH + H(+). It catalyses the reaction sn-glycerol 3-phosphate + NADP(+) = dihydroxyacetone phosphate + NADPH + H(+). Its pathway is membrane lipid metabolism; glycerophospholipid metabolism. Its function is as follows. Catalyzes the reduction of the glycolytic intermediate dihydroxyacetone phosphate (DHAP) to sn-glycerol 3-phosphate (G3P), the key precursor for phospholipid synthesis. This Streptococcus sanguinis (strain SK36) protein is Glycerol-3-phosphate dehydrogenase [NAD(P)+].